An 833-amino-acid polypeptide reads, in one-letter code: Enhancer of filamentation 1 (833 aa).

One can recognise an SH3 domain in the interval 3-65 (ARNLMARALY…PGNRVKLLIG (63 aa)). A phosphotyrosine mark is found at Tyr91, Tyr163, Tyr165, Tyr176, Tyr188, Tyr213, and Tyr222. A disordered region spans residues 237 to 258 (EKEYDFPPPMKQDGKPDTRPEG). Positions 248–258 (QDGKPDTRPEG) are enriched in basic and acidic residues. A Phosphoserine modification is found at Ser295. Disordered stretches follow at residues 297–316 (SLHHAPSQLGQSGDTQSDAY), 326–403 (EVPT…RLRL), and 560–623 (PANS…SERS). The segment covering 304–314 (QLGQSGDTQSD) has biased composition (polar residues). Tyr316 carries the phosphotyrosine modification. Basic and acidic residues predominate over residues 331-343 (TSEKANPEERDGV). The interacts with CTTN stretch occupies residues 350-833 (NPADAKGSRD…KRSLLEMATF (484 aa)). The Caspase cleavage related site signature appears at 359–362 (DVVD). Ser368 carries the phosphoserine modification. Residues 368–396 (SFSSTGSTRSNMSTSSTSSKESSLSASPS) are compositionally biased toward low complexity. Positions 564–586 (HLKNGPNSIMNSSEYTHPGSQMQ) are enriched in polar residues. Residues 709–759 (FYYDQCETHFISLLNAIDALFSCVSSAQPPRIFVAHSKFVILSAHKLVFIG) form a divergent helix-loop-helix motif region. The segment at 709–833 (FYYDQCETHF…KRSLLEMATF (125 aa)) is required for interaction with PLK1. Ser779 bears the Phosphoserine mark. Thr803 carries the phosphothreonine modification.

It belongs to the CAS family. Homodimer. Forms heterodimers with BCAR1/p130cas. Forms complexes with PTK2B/RAFTK, adapter protein CRKL and LYN kinase. Part of a complex composed of NEDD9, AURKA and CTTN; within the complex NEDD9 acts as a scaffold protein and is required for complex formation. Part of a ternary complex composed of SMAD3, ITCH/AIP4 and NEDD9/HEF1; within the complex NEDD9/HEF1 interacts (via N-terminus) with ITCH/AIP4 (via WW domains); the complex mediates ubiquitination and proteasomal degradation of NEDD9/HEF1. Interacts with SMAD3; the interaction promotes NEDD9 ubiquitination and proteasomal degradation. Interacts with ID2. Interacts with CTTN (via N-terminus). Interacts with MICAL. Interacts with TXNL4/DIM1. Interacts with BCAR3 (via Ras-GEF domain). Interacts with SH2D3C isoform 1 and isoform 2. Interacts with ECT2. Interacts with PTPN11/SHP-2 (via SH2 domains); the interaction is enhanced when NEDD9/CAS-L is tyrosine phosphorylated. Interacts (via C-terminus) with PLK1 (via polo box domains). Interacts with NKX2-5. Interacts with SMAD3; the interaction is inhibited by oxidation of NEDD9. Interacts with NEDD9/HEF1; interaction is induced by CXCL12 promotion of ABL-mediated phosphorylation of NEDD9/HEF1. Interacts (via SH3 domain) with PTK2/FAK. Interacts with FYN; in the presence of PTK2. Interacts with INPPL1/SHIP2. Post-translationally, polyubiquitinated by ITCH/AIP4, leading to proteasomal degradation. PTK2/FAK1 phosphorylates the protein at the YDYVHL motif (conserved among all cas proteins) following integrin stimulation. The SRC family kinases (FYN, SRC, LCK and CRK) are recruited to the phosphorylated sites and can phosphorylate other tyrosine residues. Ligation of either integrin beta-1 or B-cell antigen receptor on tonsillar B-cells and B-cell lines promotes tyrosine phosphorylation and both integrin and BCR-mediated tyrosine phosphorylation requires an intact actin network. Phosphorylation is required to recruit NEDD9 to T-cell receptor microclusters at the periphery of newly formed immunological synapses. In fibroblasts transformation with oncogene v-ABL results in an increase in tyrosine phosphorylation. Transiently phosphorylated following CD3 cross-linking and this phosphorylated form binds to CRKL and C3G. A mutant lacking the SH3 domain is phosphorylated upon CD3 cross-linking but not upon integrin beta-1 cross-linking. Tyrosine phosphorylation occurs upon stimulation of the G-protein coupled C1a calcitonin receptor. Calcitonin-stimulated tyrosine phosphorylation is mediated by calcium- and protein kinase C-dependent mechanisms and requires the integrity of the actin cytoskeleton. Phosphorylation at Ser-368 induces proteasomal degradation. Phosphorylated by LYN. Phosphorylation at Ser-779 by CSNK1D or CSNK1E, or phosphorylation of Thr-803 by CSNK1E enhances the interaction of NEDD9 with PLK1. As to expression, expressed in splenic lymphocytes (at protein level). Expressed in T-cells (at protein level). Expressed in the thymus. Expressed throughout the brain however particularly abundant in the cortex and hippocampus.

The protein localises to the cytoplasm. It localises to the cell cortex. It is found in the nucleus. The protein resides in the golgi apparatus. Its subcellular location is the cell projection. The protein localises to the lamellipodium. It localises to the cell junction. It is found in the focal adhesion. The protein resides in the cytoskeleton. Its subcellular location is the spindle pole. The protein localises to the cilium. It localises to the cilium basal body. It is found in the basolateral cell membrane. In terms of biological role, scaffolding protein which plays a central coordinating role for tyrosine-kinase-based signaling related to cell adhesion. As a focal adhesion protein, plays a role in embryonic fibroblast migration. May play an important role in integrin beta-1 or B cell antigen receptor (BCR) mediated signaling in B- and T-cells. Integrin beta-1 stimulation leads to recruitment of various proteins including CRKl and SHPTP2 to the tyrosine phosphorylated form. Promotes adhesion and migration of lymphocytes; as a result required for the correct migration of lymphocytes to the spleen and other secondary lymphoid organs. Plays a role in the organization of T-cell F-actin cortical cytoskeleton and the centralization of T-cell receptor microclusters at the immunological synapse. Negatively regulates cilia outgrowth in polarized cysts. Modulates cilia disassembly via activation of AURKA-mediated phosphorylation of HDAC6 and subsequent deacetylation of alpha-tubulin. Positively regulates RANKL-induced osteoclastogenesis. Required for the maintenance of hippocampal dendritic spines in the dentate gyrus and CA1 regions, thereby involved in spatial learning and memory. The sequence is that of Enhancer of filamentation 1 from Mus musculus (Mouse).